Reading from the N-terminus, the 805-residue chain is MAHRCLLLWGRGACRPRGMPPMLLPGGRTGSTERLYLRMLYRYATTQAKTSRNSLLTDVIAAYQRLCSRPPKGFEKYFPNGKNGKKTSEPKEVMGEKKEPKPAAAPRPSGGGVGGGGKRGGKKDDSHWWSRFQKGDIPWDDKEFKMYFLWTALFWGGFLFYFLFKSSGREITWKDFANNYLSKGVVDRLEVVNKRFVRVTFTPGKTPVDGQYVWFNIGSVDTFERNLETLQQELGIEGENRVPVVYIAESDGSFLLSMLPTVLIIAFLLYTIRRGPAGIGRTGRGMGGLFSVGETTAKVLKDEIDVKFKDVAGCEEAKLEIMEFVNFLKNPKQYQDLGAKIPKGAILTGPPGTGKTLLAKATAGEANVPFITVSGSEFLEMFVGVGPARVRDLFALARKNAPCILFIDEIDAVGRKRGRGNFGGQSEQENTLNQLLVEMDGFNTTTNVVILAGTNRPDILDPALMRPGRFDRQIFIGPPDIKGRASIFKVHLRPLKLDSTLEKEKLARKLASLTPGFSGADVANVCNEAALIAARHLSDSINQKHFEQAIERVIGGLEKKTQVLQPEEKKTVAYHEAGHAVAGWYLEHADPLLKVSIIPRGKGLGYAQYLPREQYLYTREQLLDRMCMTLGGRVSEEIFFGRITTGAQDDLRKVTQSAYAQIVQFGMNEKVGQISFDLPRQGDMVLEKPYSEATARLIDDEVRILINDAYKRTVALLTEKKADVEKVALLLLEKEVLDKNDMVELLGPRPFAEKSTYEEFVEGTGSLDEDTSLPEGLKDWNREREGSEEPSGEKVTSPVQGAGPA.

A mitochondrion-targeting transit peptide spans 1–39 (MAHRCLLLWGRGACRPRGMPPMLLPGGRTGSTERLYLRM). Positions 40–67 (LYRYATTQAKTSRNSLLTDVIAAYQRLC) are cleaved as a propeptide — removed in mature form. A disordered region spans residues 74 to 127 (FEKYFPNGKNGKKTSEPKEVMGEKKEPKPAAAPRPSGGGVGGGGKRGGKKDDSH). The segment covering 86–101 (KTSEPKEVMGEKKEPK) has biased composition (basic and acidic residues). Residues 109–118 (SGGGVGGGGK) are compositionally biased toward gly residues. At Lys118 the chain carries N6-succinyllysine. 2 consecutive transmembrane segments (helical) span residues 144–164 (FKMYFLWTALFWGGFLFYFLF) and 252–272 (GSFLLSMLPTVLIIAFLLYTI). ATP-binding residues include Val311, Ala312, Thr353, Gly354, Lys355, Thr356, Leu357, and His491. His575 provides a ligand contact to Zn(2+). Residue Glu576 is part of the active site. Zn(2+) contacts are provided by His579 and Asp650. The segment at 760–805 (FVEGTGSLDEDTSLPEGLKDWNREREGSEEPSGEKVTSPVQGAGPA) is disordered. Residues 776–787 (GLKDWNREREGS) show a composition bias toward basic and acidic residues.

It in the N-terminal section; belongs to the AAA ATPase family. The protein in the C-terminal section; belongs to the peptidase M41 family. As to quaternary structure, homohexamer. Forms heterohexamers with SPG7. The m-AAA protease is either composed of homohexamers of AFG3L2 or heterohexamers of AFG3L2 and SPG7. Interacts with MAIP1. Interacts with DNAJC19. Interacts with PHB2. Zn(2+) serves as cofactor. In terms of processing, upon import into the mitochondrion, the N-terminal transit peptide is cleaved to generate an intermediate form which undergoes autocatalytic proteolytic processing to generate the proteolytically active mature form.

It is found in the mitochondrion inner membrane. The enzyme catalyses ATP + H2O = ADP + phosphate + H(+). In terms of biological role, catalytic component of the m-AAA protease, a protease that plays a key role in proteostasis of inner mitochondrial membrane proteins, and which is essential for axonal and neuron development. AFG3L2 possesses both ATPase and protease activities: the ATPase activity is required to unfold substrates, threading them into the internal proteolytic cavity for hydrolysis into small peptide fragments. The m-AAA protease carries out protein quality control in the inner membrane of the mitochondria by mediating degradation of mistranslated or misfolded polypeptides. The m-AAA protease complex also promotes the processing and maturation of mitochondrial proteins, such as MRPL32/bL32m, PINK1 and SP7. Mediates protein maturation of the mitochondrial ribosomal subunit MRPL32/bL32m by catalyzing the cleavage of the presequence of MRPL32/bL32m prior to assembly into the mitochondrial ribosome. Required for SPG7 maturation into its active mature form after SPG7 cleavage by mitochondrial-processing peptidase (MPP). Required for the maturation of PINK1 into its 52kDa mature form after its cleavage by mitochondrial-processing peptidase (MPP). Acts as a regulator of calcium in neurons by mediating degradation of SMDT1/EMRE before its assembly with the uniporter complex, limiting the availability of SMDT1/EMRE for MCU assembly and promoting efficient assembly of gatekeeper subunits with MCU. Promotes the proteolytic degradation of GHITM upon hyperpolarization of mitochondria: progressive GHITM degradation leads to respiratory complex I degradation and broad reshaping of the mitochondrial proteome by AFG3L2. Also acts as a regulator of mitochondrial glutathione homeostasis by mediating cleavage and degradation of SLC25A39. SLC25A39 cleavage is prevented when SLC25A39 binds iron-sulfur. Involved in the regulation of OMA1-dependent processing of OPA1. May act by mediating processing of OMA1 precursor, participating in OMA1 maturation. In Bos taurus (Bovine), this protein is Mitochondrial inner membrane m-AAA protease component AFG3L2 (AFG3L2).